Consider the following 273-residue polypeptide: Beta-lactamase OXA-23 (273 aa).

Residues 1–17 (MNKYFTCYVVASLFLSG) form the signal peptide. Serine 79 acts as the Acyl-ester intermediate in catalysis. A beta-lactam-binding residues include serine 79, lysine 82, serine 126, threonine 217, tryptophan 219, and arginine 259. An N6-carboxylysine modification is found at lysine 82.

It belongs to the class-D beta-lactamase family. In terms of assembly, monomer. In terms of processing, carboxylated on the epsilon-amino group of a lysine, with the resulting carbamate functional group serving as a general base. Probably N-carboxylated at Lys-82 at neutral pH in vivo and undergoes complete N-decarboxylation, at pH 4.1, in vitro.

It localises to the periplasm. It catalyses the reaction a beta-lactam + H2O = a substituted beta-amino acid. Its activity is regulated as follows. Inhibited by the desmethyl carbapenem, MA-1-206, via a covalent binding to Ser-79. In terms of biological role, class D beta-lactamase which confers resistance to the beta-lactam antibiotics, including ampicillin, and carbapenems such as imipenem and meropenem. Acts via hydrolysis of the beta-lactam ring. Has penicillin-, cephalosporin- and carbapenem-hydrolyzing activities, but lacks ceftazidime-hydrolyzing activity. In Acinetobacter baumannii, this protein is Beta-lactamase OXA-23.